The sequence spans 592 residues: MKVVDKIKSVTEQGQTAFSFEFFPPKTEDGVENLFERMDRLVSYGPTFCDITWGAGGSTADLTLEIASRMQNVICVETMMHLTCTNMPIEKIDHALETIRSNGIQNVLALRGDPPHGQDKFVQVEGGFACALDLVNHIRSKYGDYFGITVAGYPEAHPDVIEADGLATPESYQSDLAYLKKKVDAGADLIVTQLFYDTDIFLKFVNDCRQIGINCPIVPGIMPISNYKGFLRMAGFCKTKIPAELTAALEPIKDNDEAVKAYGIHFATEMCKKILAHGITSLHLYTLNVDKSAIGILMNLGLIDESKISRSLPWRRPANVFRTKEDVRPIFWANRPKSYISRTKGWNDFPHGRWGDSHSAAYSTLSDYQFARPKGRDKKLQQEWVVPLKSIEDVQEKFKELCIGNLKSSPWSELDGLQPETKIINEQLGKINSNGFLTINSQPSVNAAKSDSPAIGWGGPGGYVYQKAYLEFFCSKDKLDTLVEKSKAFPSITYMAVNKSENWVSNTGESDVNAVTWGVFPAKEVIQPTIVDPASFKVWKDEAFEIWSRSWANLYPEDDPSRKLLEEVKNSYYLVSLVDNNYINGDIFSVFA.

Catalysis depends on Glu21, which acts as the Proton donor/acceptor. NAD(+)-binding positions include 21–26 (EFFPPK) and 52–53 (TW). Residues 52 to 53 (TW), His81, 111 to 113 (RGD), Tyr153, 157 to 160 (HPDV), Asp175, and Lys182 each bind FAD. Residue Asp113 coordinates substrate. 2 residues coordinate substrate: Gln193 and Tyr285.

The protein belongs to the methylenetetrahydrofolate reductase family. In terms of assembly, homodimer. The cofactor is FAD.

The enzyme catalyses (6S)-5-methyl-5,6,7,8-tetrahydrofolate + NAD(+) = (6R)-5,10-methylene-5,6,7,8-tetrahydrofolate + NADH + H(+). It functions in the pathway one-carbon metabolism; tetrahydrofolate interconversion. With respect to regulation, plant MTHFRs strongly prefer NADH over NADPH. Not inhibited by methionine or S-adenosylmethionine. Functionally, the probable reversibility of the MTHFR reaction in plants suggests that they can metabolize the methyl group of 5,10-methylenetetrahydrofolate to serine, sugars and starch. This chain is Methylenetetrahydrofolate reductase (NADH) 1 (MTHFR1), found in Arabidopsis thaliana (Mouse-ear cress).